Consider the following 289-residue polypeptide: Probable ABC transporter permease protein BRA0749/BS1330_II0742 (289 aa).

The next 6 membrane-spanning stretches (helical) occupy residues 9–29, 70–90, 99–119, 144–166, 213–233, and 260–280; these read FLIL…VVHL, VWTV…AIIL, VARV…AIVW, IQWL…LVTV, IAIV…WVMT, and EASA…VIYI. Residues 65-279 enclose the ABC transmembrane type-1 domain; that stretch reads LWRTAVWTVA…AILLVFTVIY (215 aa).

It belongs to the binding-protein-dependent transport system permease family. The complex is composed of two ATP-binding proteins (BRA0745), two transmembrane proteins (BRA0749) and a solute-binding protein (BRA0748).

It localises to the cell inner membrane. Functionally, probably part of an ABC transporter complex. Probably responsible for the translocation of the substrate across the membrane. The chain is Probable ABC transporter permease protein BRA0749/BS1330_II0742 from Brucella suis biovar 1 (strain 1330).